The primary structure comprises 151 residues: Globin (151 aa).

Residues 2-151 (SLSDADKKAL…AAFNETLKKA (150 aa)) form the Globin domain. His-100 is a binding site for heme b.

It belongs to the globin family.

This Biomphalaria glabrata (Bloodfluke planorb) protein is Globin.